Consider the following 176-residue polypeptide: Orotate phosphoribosyltransferase (176 aa).

5-phospho-alpha-D-ribose 1-diphosphate-binding positions include R90, K91, K94, and 116 to 124; that span reads EDVTTTGGS. Orotate is bound by residues T120 and R148.

It belongs to the purine/pyrimidine phosphoribosyltransferase family. PyrE subfamily. In terms of assembly, homodimer. The cofactor is Mg(2+).

The catalysed reaction is orotidine 5'-phosphate + diphosphate = orotate + 5-phospho-alpha-D-ribose 1-diphosphate. Its pathway is pyrimidine metabolism; UMP biosynthesis via de novo pathway; UMP from orotate: step 1/2. In terms of biological role, catalyzes the transfer of a ribosyl phosphate group from 5-phosphoribose 1-diphosphate to orotate, leading to the formation of orotidine monophosphate (OMP). This is Orotate phosphoribosyltransferase from Methanocaldococcus jannaschii (strain ATCC 43067 / DSM 2661 / JAL-1 / JCM 10045 / NBRC 100440) (Methanococcus jannaschii).